The primary structure comprises 64 residues: Prokaryotic ubiquitin-like protein Pup (64 aa).

The disordered stretch occupies residues 1-35 (MAQGGQVSAGGGRRDDDEPIEQTSGAGTQQVNVTG). The segment covering 21–33 (EQTSGAGTQQVNV) has biased composition (polar residues). The interval 21 to 58 (EQTSGAGTQQVNVTGTDDLLDEIDGLLENNAEEFVRSY) is ARC ATPase binding. Q64 carries the post-translational modification Deamidated glutamine. Q64 participates in a covalent cross-link: Isoglutamyl lysine isopeptide (Gln-Lys) (interchain with K-? in acceptor proteins).

Belongs to the prokaryotic ubiquitin-like protein family. Strongly interacts with the proteasome-associated ATPase ARC through a hydrophobic interface; the interacting region of Pup lies in its C-terminal half. There is one Pup binding site per ARC hexamer ring. Post-translationally, is modified by deamidation of its C-terminal glutamine to glutamate by the deamidase Dop, a prerequisite to the subsequent pupylation process.

The protein operates within protein degradation; proteasomal Pup-dependent pathway. In terms of biological role, protein modifier that is covalently attached to lysine residues of substrate proteins, thereby targeting them for proteasomal degradation. The tagging system is termed pupylation. The protein is Prokaryotic ubiquitin-like protein Pup of Corynebacterium jeikeium (strain K411).